Consider the following 108-residue polypeptide: Small ribosomal subunit protein uS10 (108 aa).

Belongs to the universal ribosomal protein uS10 family. As to quaternary structure, part of the 30S ribosomal subunit.

Functionally, involved in the binding of tRNA to the ribosomes. The sequence is that of Small ribosomal subunit protein uS10 from Ehrlichia chaffeensis (strain ATCC CRL-10679 / Arkansas).